We begin with the raw amino-acid sequence, 455 residues long: UDP-glycosyltransferase 79B2 (455 aa).

Residues Ser-266, 325-327 (VQQ), 342-350 (HCGFGSMWE), and 364-367 (LGDQ) each bind UDP-alpha-D-glucose.

The protein belongs to the UDP-glycosyltransferase family.

The protein is UDP-glycosyltransferase 79B2 (UGT79B2) of Arabidopsis thaliana (Mouse-ear cress).